A 172-amino-acid polypeptide reads, in one-letter code: Centrin-2 (172 aa).

Positions 1–14 (MASNFKKTTMASSA) are enriched in polar residues. A disordered region spans residues 1–31 (MASNFKKTTMASSAQRKRMSPKPELTEDQKQ). Ala-2 carries the N-acetylalanine modification. A required for self-assembly region spans residues 2-25 (ASNFKKTTMASSAQRKRMSPKPEL). Ser-20 is subject to Phosphoserine. Lys-22 is covalently cross-linked (Glycyl lysine isopeptide (Lys-Gly) (interchain with G-Cter in SUMO2)). Thr-26 bears the Phosphothreonine mark. EF-hand domains are found at residues 28-63 (DQKQ…LGFE), 64-99 (PKKE…KMSE), 101-136 (DTKE…LGEN), and 137-172 (LTDE…TSLY). Residues Asp-41, Asp-43, Thr-45, Thr-47, and Glu-52 each coordinate Ca(2+). 5 residues coordinate Ca(2+): Asp-150, Asp-152, Asp-154, Glu-156, and Glu-161.

This sequence belongs to the centrin family. Monomer. Homooligomer. Interacts with CCP110, SFI1. Component of the XPC complex composed of XPC, RAD23B and CETN2. Component of the nuclear pore complex (NPC)-associated TREX-2 complex (transcription and export complex 2), composed of at least GANP, 2 copies of ENY2, PCID2, SEM1/DSS1, and either centrin CETN2 or centrin CETN3. The TREX-2 complex also associates with ALYREF/ALY and with the nucleoporin NUP153. Interacts with USP49. Forms a microtubule-associated complex with POC5, POC1B and FAM161A. Interacts with CCDC15. In terms of tissue distribution, ubiquitously expressed in all adult tissues tested, with strongest expression in brain, spleen, kidney, small intestine and ovary. Also expressed in the NIH 3T3 fibroblast cell line and peripheral blood lymphocytes.

It localises to the cytoplasm. The protein resides in the cytoskeleton. It is found in the microtubule organizing center. The protein localises to the centrosome. Its subcellular location is the centriole. It localises to the nucleus. The protein resides in the nucleus envelope. It is found in the nuclear pore complex. Functionally, plays a fundamental role in microtubule organizing center structure and function. Required for centriole duplication and correct spindle formation. Has a role in regulating cytokinesis and genome stability via cooperation with CALM1 and CCP110. Involved in global genome nucleotide excision repair (GG-NER) by acting as component of the XPC complex. Cooperatively with Rad23b appears to stabilize Xpc. In vitro, stimulates DNA binding of the Xpc:Rad23b dimer. Its function is as follows. The XPC complex is proposed to represent the first factor bound at the sites of DNA damage and together with other core recognition factors, Xpa, RPA and the TFIIH complex, is part of the pre-incision (or initial recognition) complex. The XPC complex recognizes a wide spectrum of damaged DNA characterized by distortions of the DNA helix such as single-stranded loops, mismatched bubbles or single-stranded overhangs. The orientation of XPC complex binding appears to be crucial for inducing a productive NER. XPC complex is proposed to recognize and to interact with unpaired bases on the undamaged DNA strand which is followed by recruitment of the TFIIH complex and subsequent scanning for lesions in the opposite strand in a 5'-to-3' direction by the NER machinery. Cyclobutane pyrimidine dimers (CPDs) which are formed upon UV-induced DNA damage esacpe detection by the XPC complex due to a low degree of structural perurbation. Instead they are detected by the UV-DDB complex which in turn recruits and cooperates with the XPC complex in the respective DNA repair. In terms of biological role, as a component of the TREX-2 complex, involved in the export of mRNAs to the cytoplasm through the nuclear pores. The polypeptide is Centrin-2 (Cetn2) (Mus musculus (Mouse)).